The primary structure comprises 754 residues: uncharacterized protein (754 aa).

Catalysis depends on charge relay system residues Ser585 and His707. Residues 733–754 (SHAPPPSRKARSAARRSTDPVR) are disordered.

Belongs to the peptidase S9A family.

This is an uncharacterized protein from Sinorhizobium fredii (strain NBRC 101917 / NGR234).